Consider the following 199-residue polypeptide: Holliday junction branch migration complex subunit RuvA (199 aa).

The interval 1-64 (MIARLTGMLA…EDAISLFGFR (64 aa)) is domain I. The interval 65-143 (TVAEKEFFQV…KMDVAPSTKE (79 aa)) is domain II. The flexible linker stretch occupies residues 144 to 154 (AAPSEAPPEVA). The segment at 154 to 199 (ADDVASALVNLGYKEAVVRKVLAEMAIESGASTEAVLRQALKILMK) is domain III.

Belongs to the RuvA family. Homotetramer. Forms an RuvA(8)-RuvB(12)-Holliday junction (HJ) complex. HJ DNA is sandwiched between 2 RuvA tetramers; dsDNA enters through RuvA and exits via RuvB. An RuvB hexamer assembles on each DNA strand where it exits the tetramer. Each RuvB hexamer is contacted by two RuvA subunits (via domain III) on 2 adjacent RuvB subunits; this complex drives branch migration. In the full resolvosome a probable DNA-RuvA(4)-RuvB(12)-RuvC(2) complex forms which resolves the HJ.

The protein resides in the cytoplasm. In terms of biological role, the RuvA-RuvB-RuvC complex processes Holliday junction (HJ) DNA during genetic recombination and DNA repair, while the RuvA-RuvB complex plays an important role in the rescue of blocked DNA replication forks via replication fork reversal (RFR). RuvA specifically binds to HJ cruciform DNA, conferring on it an open structure. The RuvB hexamer acts as an ATP-dependent pump, pulling dsDNA into and through the RuvAB complex. HJ branch migration allows RuvC to scan DNA until it finds its consensus sequence, where it cleaves and resolves the cruciform DNA. The polypeptide is Holliday junction branch migration complex subunit RuvA (Geobacter metallireducens (strain ATCC 53774 / DSM 7210 / GS-15)).